Reading from the N-terminus, the 84-residue chain is Cell division topological specificity factor (84 aa).

The protein belongs to the MinE family.

Functionally, prevents the cell division inhibition by proteins MinC and MinD at internal division sites while permitting inhibition at polar sites. This ensures cell division at the proper site by restricting the formation of a division septum at the midpoint of the long axis of the cell. The protein is Cell division topological specificity factor of Burkholderia cenocepacia (strain HI2424).